A 373-amino-acid chain; its full sequence is LIM domain-binding protein 2 (373 aa).

Disordered stretches follow at residues 244–287 (APPA…KTPA) and 327–373 (QYDA…QASQ). Over residues 263 to 280 (STSSTSNSSAGNTTNSAG) the composition is skewed to low complexity. The 40-residue stretch at 298-337 (DVMVVGEPTLMGGEFGDEDERLITRLENTQYDAANGMDDE) folds into the LIM interaction domain (LID) domain. Polar residues predominate over residues 341–373 (NNSPALGNNSPWNSKPPATQETKSENAPPQASQ).

The protein belongs to the LDB family. In terms of assembly, interacts with LHX9. Interacts with SLK; leading to negatively regulate SLK kinase activity. Interacts with LMO4. Interacts with PITX1. Interacts with LHX3. In terms of processing, ubiquitinated by RLIM/RNF12, leading to its degradation by the proteasome. In terms of tissue distribution, expressed in multiple tissues including heart, brain, liver, kidney, testis, lung and muscle, with expression highest in the brain, trigeminal ganglia, and lung.

It localises to the nucleus. Transcription cofactor. Binds to the LIM domain of a wide variety of LIM domain-containing transcription factors. Its function is as follows. Regulates the transcriptional activity of LIM-containing proteins such as LHX3 or PITX1. The sequence is that of LIM domain-binding protein 2 (Ldb2) from Mus musculus (Mouse).